A 392-amino-acid polypeptide reads, in one-letter code: MITIGTALRPAATRVMLLGAGELGKEVAIECQRLGIEVIAVGHYADAPAMHIAHRHHVINMLDGAALRAVIEHERPHFIVPEIEAIATDMLVTLEQEGHHVVPCANATRLTMNREGIRRLAAETLSLPTSRYRFAADRAELDKAVEAIGYPFIIKPVMSSSGKGQSLVRDAAQLDAAWQYAQLGGRAGGGKVIVEGLVAFDFEITLLTINAVDGIHFCAPIGHRQEDGDYRESWQPQHMSALARQRAQTIAADVVTALGGKGLFGVELFICGDDVIFSEVSPRPHDTGMVTLISQDLSEFALHVRAFLGLPIGTIRQYGPAASAVILPELQSDNVSFSGLENALAAGQQIRLFGKPDLSGKRRLGVALAVAATVEEAVTVAKDAAAAVRVTG.

N(1)-(5-phospho-beta-D-ribosyl)glycinamide is bound by residues 22–23 (EL) and Glu-82. ATP is bound by residues Arg-114, Lys-155, 160–165 (SSGKGQ), 195–198 (EGLV), and Glu-203. Positions 119–308 (RLAAETLSLP…EFALHVRAFL (190 aa)) constitute an ATP-grasp domain. 2 residues coordinate Mg(2+): Glu-267 and Glu-279. N(1)-(5-phospho-beta-D-ribosyl)glycinamide is bound by residues Asp-286, Lys-355, and 362 to 363 (RR).

Belongs to the PurK/PurT family. As to quaternary structure, homodimer.

The enzyme catalyses N(1)-(5-phospho-beta-D-ribosyl)glycinamide + formate + ATP = N(2)-formyl-N(1)-(5-phospho-beta-D-ribosyl)glycinamide + ADP + phosphate + H(+). It participates in purine metabolism; IMP biosynthesis via de novo pathway; N(2)-formyl-N(1)-(5-phospho-D-ribosyl)glycinamide from N(1)-(5-phospho-D-ribosyl)glycinamide (formate route): step 1/1. Its function is as follows. Involved in the de novo purine biosynthesis. Catalyzes the transfer of formate to 5-phospho-ribosyl-glycinamide (GAR), producing 5-phospho-ribosyl-N-formylglycinamide (FGAR). Formate is provided by PurU via hydrolysis of 10-formyl-tetrahydrofolate. This chain is Formate-dependent phosphoribosylglycinamide formyltransferase, found in Sodalis glossinidius (strain morsitans).